A 1061-amino-acid chain; its full sequence is DNA primase TraC (1061 aa).

A Toprim domain is found at 850-938; sequence PALVIGEGYA…GKAIFPIFAP (89 aa). The disordered stretch occupies residues 1034 to 1061; that stretch reads EGQRQKVQQLKQQDIEQQEQRQRRARTY.

Required for autonomous replication in E.coli. Transferred into the recipient cell during bacterial conjugation. Catalyzes the synthesis of short oligoribonucleotide primers with CpA or pCpA at their 5'-termini on a single-stranded template DNA. The polypeptide is DNA primase TraC (traC) (Escherichia coli).